Consider the following 657-residue polypeptide: Cyclic-di-AMP phosphodiesterase PdeA (657 aa).

Transmembrane regions (helical) follow at residues 13–35 (PLYG…SWWL) and 37–53 (ALVV…MFYF). Positions 74–137 (RSEEEALVEM…ITGNDEKGIM (64 aa)) are PAS-like. The 129-residue stretch at 175–303 (NKSVFAVIFL…GGDQVVIKQP (129 aa)) folds into the GGDEF domain. The segment at 342 to 498 (VFVMGHRYPD…IEATALLSGI (157 aa)) is DHH. Mn(2+) contacts are provided by histidine 347, aspartate 351, aspartate 353, aspartate 422, histidine 446, and aspartate 501. Residues 592 to 645 (VITLRPDKLIGISARSLGQINVQVIMEKLGGGGHLSNAATQLKDVTIAEAEKQL) are DHHA1.

It belongs to the GdpP/PdeA phosphodiesterase family. Heme b is required as a cofactor. Requires Mn(2+) as cofactor.

Its subcellular location is the cell membrane. It catalyses the reaction 3',3'-c-di-AMP + H2O = 5'-O-phosphonoadenylyl-(3'-&gt;5')-adenosine + H(+). In terms of biological role, has phosphodiesterase (PDE) activity against cyclic-di-AMP (c-di-AMP). Overexpression decreases export of c-di-AMP, leads to slightly increased susceptibility to the antibiotic cefuroxime and somewhat slower growth in macrophages. There are at least 2 PDEs for c-di-AMP in this bacteria (this one and pgpH); this may be the major PDE for intracellular growth in host macrophages. During host infection c-di-AMP is secreted into the host cytoplasm which leads to interferon-beta production and secretion by the host. c-di-AMP is a second messenger that mediates growth, cell wall stability and virulence. May monitor cellular heme or NO levels. The polypeptide is Cyclic-di-AMP phosphodiesterase PdeA (Listeria monocytogenes serotype 1/2a (strain 10403S)).